We begin with the raw amino-acid sequence, 650 residues long: Laccase-like multicopper oxidase 1 (650 aa).

The first 20 residues, 1–20, serve as a signal peptide directing secretion; sequence MLLSKLSILLAKWLSVAVYA. Plastocyanin-like domains follow at residues 41 to 151, 162 to 360, and 439 to 595; these read QVPS…IVED, ERIL…LRYN, and KPVL…VVGD. Cysteines 46 and 254 form a disulfide. N-linked (GlcNAc...) asparagine glycans are attached at residues asparagine 55 and asparagine 83. Positions 87, 89, 133, and 135 each coordinate Cu cation. The Cu cation site is built by histidine 501, histidine 504, histidine 506, histidine 576, cysteine 577, histidine 578, and histidine 582. N-linked (GlcNAc...) asparagine glycosylation is present at asparagine 620.

This sequence belongs to the multicopper oxidase family. In terms of assembly, monomer. In terms of processing, N-glycosylation Asn-55 and Asn-83 is involved in folding, conformational stability and laccase activity.

The enzyme catalyses 2 2',3,4-trihydroxy-trans-chalcone + O2 + 2 H(+) = 2 3',4'-dihydroxyaurone + 2 H2O. Its activity is regulated as follows. Retains almost half of its activity in presence of high salt concentrations up to 100 mM NaCl. Retains also more than 85% of its original activity in the presence of 1 mM EDTA, indicating a satisfactory resistance towards chelators, which is rare among metal-containing enzyme. The activity drops significantly in the presence of NaN(3) or SDS. Appears more active in the presence of methanol compared to ethanol, but acetone or DMSO addition severely affect remaining laccase activity. In terms of biological role, yellow laccase-like multicopper oxidase that is able to oxidize a variety of phenolic compounds including standard laccase substrates such as 2'-azino-bis(3-ethylbenzothiazoline-6-sulphonic acid) (ABTS) and 2,6-dimethoxyphenol (2,6-DMP). The existence of an ortho-hydroxy group is crucial for oxidation since pyrogallol and catechol, which contain ortho-hydroxy groups, are readily oxidized, which is not the case for resorcinol and hydroquinone, that contain meta- and para-hydroxy groups, respectively. The same is also true for the existence of a methoxy group in an ortho-position, since 2,6-DMP, guaiacol and ferulic and caffeic acids are also rather easily oxidized compared with the corresponding unsubstituted compound. Can be used for the bioconversion of 2',3,4-trihy-droxychalcone to 3',4'-dihydroxy-aurone, a bioactive aurone recently shown to possess inhibitory activity against several isoforms of the histone deacetylase complex (HDAC). This Thermothelomyces thermophilus (strain ATCC 42464 / BCRC 31852 / DSM 1799) (Sporotrichum thermophile) protein is Laccase-like multicopper oxidase 1.